The following is a 648-amino-acid chain: Mitochondrial Rho GTPase 3 (648 aa).

Residues 1–621 are Cytoplasmic-facing; sequence MWMGVGDSSG…KRSCKLNNRS (621 aa). A Phosphoserine modification is found at S11. One can recognise a Miro 1 domain in the interval 12–179; that stretch reads PKPIRIVVVG…LYYAQKAVID (168 aa). 2 EF-hand domains span residues 195–230 and 316–351; these read RCIA…CFDT and VAIE…APES. D208, N210, D212, E219, D329, N331, D333, N335, and E340 together coordinate Ca(2+). Residues 425 to 599 enclose the Miro 2 domain; that stretch reads RKVVQCFVFG…FRKILTAAEN (175 aa). A helical membrane pass occupies residues 622–644; the sequence is LMAVSIGTAVLIAGLASFRLYTA. Over 645–648 the chain is Mitochondrial intermembrane; the sequence is RKQS.

This sequence belongs to the mitochondrial Rho GTPase family. As to expression, expressed at very low levels in roots, leaves, stems, flowers and siliques.

It is found in the mitochondrion outer membrane. Functionally, mitochondrial GTPase that may be involved in mitochondrion development. This Arabidopsis thaliana (Mouse-ear cress) protein is Mitochondrial Rho GTPase 3.